Consider the following 176-residue polypeptide: MTIYEIKSYLSRPYAEAAFKFANENNIVDDWIYMIEEICKILKNIKIYSLSSFILKKNKNFLFESIKNNFDVYFNNFVKIIIENNRLIIFPEILNQFINLKNDQNNIENITIISKYKLDKKILNKIEKKIKSLIFKEIKINIKIDKSIIGGYIIKSKNFLIDNSIKNKLYRFSEYL.

The protein belongs to the ATPase delta chain family. F-type ATPases have 2 components, F(1) - the catalytic core - and F(0) - the membrane proton channel. F(1) has five subunits: alpha(3), beta(3), gamma(1), delta(1), epsilon(1). F(0) has three main subunits: a(1), b(2) and c(10-14). The alpha and beta chains form an alternating ring which encloses part of the gamma chain. F(1) is attached to F(0) by a central stalk formed by the gamma and epsilon chains, while a peripheral stalk is formed by the delta and b chains.

Its subcellular location is the cell membrane. F(1)F(0) ATP synthase produces ATP from ADP in the presence of a proton or sodium gradient. F-type ATPases consist of two structural domains, F(1) containing the extramembraneous catalytic core and F(0) containing the membrane proton channel, linked together by a central stalk and a peripheral stalk. During catalysis, ATP synthesis in the catalytic domain of F(1) is coupled via a rotary mechanism of the central stalk subunits to proton translocation. Functionally, this protein is part of the stalk that links CF(0) to CF(1). It either transmits conformational changes from CF(0) to CF(1) or is implicated in proton conduction. This is ATP synthase subunit delta from Wigglesworthia glossinidia brevipalpis.